The following is a 414-amino-acid chain: NFATC2-interacting protein (414 aa).

The disordered stretch occupies residues 1 to 42 (MAEPLRRRGPRSRGGRASRGARRARAARGRCPRAPRSPTRLI). Basic residues predominate over residues 7 to 33 (RRGPRSRGGRASRGARRARAARGRCPR). Residues Ser52 and Ser54 each carry the phosphoserine modification. The interval 63–118 (ADPGEVPVARLPAPAAPEQDSDSDSEGAAEGPAGAPRTLVRRRRRLLDPGEAPVVP) is disordered. A compositionally biased stretch (low complexity) spans 68-79 (VPVARLPAPAAP). Ser83, Ser85, and Ser87 each carry phosphoserine. Over residues 90–100 (AAEGPAGAPRT) the composition is skewed to low complexity. A Phosphoserine modification is found at Ser121. Lys123 participates in a covalent cross-link: Glycyl lysine isopeptide (Lys-Gly) (interchain with G-Cter in SUMO2). The segment at 139–208 (KLCPSEPEDE…SSRNKSRKHT (70 aa)) is disordered. Residues 170-229 (KKKLRKKHEKEEKKMEEFPDQDISPLPQPSSRNKSRKHTEALQKLREVNKRLQDLRSCLS) adopt a coiled-coil conformation. Ser193, Ser199, and Ser309 each carry phosphoserine. Phosphothreonine is present on residues Thr311 and Thr313. Residues 343 to 414 (LRLRVQGKEK…ESGDLIEVWG (72 aa)) form the Ubiquitin-like domain. Phosphoserine occurs at positions 364 and 385.

Interacts with NFATC2, TRAF1, TRAF2 and PRMT1. Interacts with UBE2I/UBC9. Methylation at the N-terminus by PRMT1 modulates interaction with the NFAT complex and results in augmented cytokine production.

It is found in the nucleus. The protein localises to the cytoplasm. In T-helper 2 (Th2) cells, regulates the magnitude of NFAT-driven transcription of a specific subset of cytokine genes, including IL3, IL4, IL5 and IL13, but not IL2. Recruits PRMT1 to the IL4 promoter; this leads to enhancement of histone H4 'Arg-3'-methylation and facilitates subsequent histone acetylation at the IL4 locus, thus promotes robust cytokine expression. Down-regulates formation of poly-SUMO chains by UBE2I/UBC9. The sequence is that of NFATC2-interacting protein (Nfatc2ip) from Rattus norvegicus (Rat).